A 445-amino-acid polypeptide reads, in one-letter code: ATP-dependent protease ATPase subunit HslU (445 aa).

ATP contacts are provided by residues Ile17, 59–64 (GVGKTE), Asp254, Glu319, and Arg391.

Belongs to the ClpX chaperone family. HslU subfamily. As to quaternary structure, a double ring-shaped homohexamer of HslV is capped on each side by a ring-shaped HslU homohexamer. The assembly of the HslU/HslV complex is dependent on binding of ATP.

Its subcellular location is the cytoplasm. Functionally, ATPase subunit of a proteasome-like degradation complex; this subunit has chaperone activity. The binding of ATP and its subsequent hydrolysis by HslU are essential for unfolding of protein substrates subsequently hydrolyzed by HslV. HslU recognizes the N-terminal part of its protein substrates and unfolds these before they are guided to HslV for hydrolysis. The protein is ATP-dependent protease ATPase subunit HslU of Pseudomonas fluorescens (strain SBW25).